The following is a 541-amino-acid chain: Lipase-like PAD4 (541 aa).

Ser118 acts as the Nucleophile in catalysis. Catalysis depends on charge relay system residues Asp178 and His229.

It belongs to the AB hydrolase superfamily. Lipase family. In terms of assembly, part of a nuclear complex made of EDS1, SG101 and PAD4 that can be redirected to the cytoplasm in the presence of an extranuclear form of EDS1. Sabilized by direct interaction with EDS1 in infected leaves. Part of a nuclear protein complex made of VICTR, PAD4 and EDS1. Interacts with VICTR. Interacts with EDS1.

The protein localises to the nucleus. Its subcellular location is the cytoplasm. Functionally, probable lipase required downstream of MPK4 for accumulation of the plant defense-potentiating molecule, salicylic acid, thus contributing to the plant innate immunity against invasive biotrophic pathogens and to defense mechanisms upon recognition of microbe-associated molecular patterns (MAMPs). Participates in the regulation of various molecular and physiological processes that influence fitness. Together with SG101, required for programmed cell death (PCD) triggered by NBS-LRR resistance proteins (e.g. RPS4, RPW8.1 and RPW8.2) in response to the fungal toxin fumonisin B1 (FB1) and avirulent pathogens (e.g. P.syringae pv. tomato strain DC3000 avrRps4 and pv. maculicola, turnip crinkle virus (TCV), and H.arabidopsidis isolates CALA2, EMOY2, EMWA1 and HIND4). Together with EDS1, confers a basal resistance by restricting the growth of virulent pathogens (e.g. H.arabidopsidis isolates NOCO2 and EMCO5, E.orontii isolate MGH, and P.syringae pv. tomato strain DC3000 or expressing HopW1-1 (HopPmaA)). Necessary for the salicylic acid-(SA-) dependent systemic acquired resistance (SAR) response that involves expression of multiple defense responses, including synthesis of the phytoalexin camalexin and expression of pathogenesis-related genes (e.g. PR1, ALD1, BGL2 and PR5) in response to pathogens, triggering a signal amplification loop that increases SA levels via EDS5 and SID2, but, together with EDS1, seems to repress the ethylene/jasmonic acid (ET/JA) defense pathway. May also function in response to abiotic stresses such as UV-C light and LSD1-dependent acclimatization to light conditions that promote excess excitation energy (EEE), probably by transducing redox signals and modulating stomatal conductance. Regulates the formation of lysigenous aerenchyma in hypocotyls in response to hypoxia, maybe via hydrogen peroxide production. Modulates leaf senescence in insect-infested tissue and triggers a phloem-based defense mechanism including antibiosis (e.g. green peach aphid (GPA), M.persicae) to limit phloem sap uptake and insect growth, thus providing an EDS1-independent basal resistance to insects. Also involved in regulation of root meristematic zone-targeted growth arrest together with EDS1 and in a VICTR-dependent manner. This Arabidopsis thaliana (Mouse-ear cress) protein is Lipase-like PAD4 (PAD4).